Reading from the N-terminus, the 60-residue chain is Protein translocase subunit SecE (60 aa).

At 1 to 31 the chain is on the cytoplasmic side; it reads MFARLIRYFQEARAELARVTWPTREQVVEGT. Residues 32-52 form a helical membrane-spanning segment; sequence QAILLFTLAFMVILGLYDTVF. Residues 53-60 are Extracellular-facing; the sequence is RFLIGLLR.

This sequence belongs to the SecE/SEC61-gamma family. In terms of assembly, component of the Sec protein translocase complex. Heterotrimer consisting of SecY, SecE and SecG subunits. The heterotrimers can form oligomers, although 1 heterotrimer is thought to be able to translocate proteins. Interacts with SecDF, and other proteins may be involved. The channel interacts with SecA via subunit SecY.

It localises to the cell inner membrane. Functionally, essential subunit of the protein translocation channel SecYEG. Clamps together the 2 halves of SecY. May contact the channel plug during translocation. In Thermus thermophilus (strain ATCC 27634 / DSM 579 / HB8), this protein is Protein translocase subunit SecE.